A 319-amino-acid chain; its full sequence is MCSLPVPREPLRRVAVTGGTHGNEMSGVYLARHWLHAPAELQRASFSAVPVLANPAATSGCRRYVDHDLNRTFTSSFLNSRPTPDDPYEVTRARELNQLLGPKASGQAFDFVLDLHNTTANMGTCLIAKSSHEVFAMHLCRHLQLQYPELSCQVFLYQRSGEESYNLDSVAKNGLGLELGPQPQGVLRADIFSRMRTLVATVLDFIELFNQGTAFPAFEMEAYRPVGVVDFPRTEAGHLAGTVHPQLQDRDFQPLQPGAPIFQMFSGEDLLYEGESTVYPVFINEAAYYEKGVAFVQTEKFTFTVPAMPALTPAPSPAS.

The interval 1–210 (MCSLPVPREP…TVLDFIELFN (210 aa)) is hydrolytic domain. Zn(2+) is bound by residues H21 and E24. Residues R63 and 70-71 (NR) each bind substrate. A Zn(2+)-binding site is contributed by H116. Positions 178 and 288 each coordinate substrate. Residues 211–318 (QGTAFPAFEM…PALTPAPSPA (108 aa)) are shielding domain.

The protein belongs to the AspA/AstE family. Aspartoacylase subfamily. Exists as a mixture of homodimers and homotetramer, both catalytically active. As to quaternary structure, (Microbial infection) Interacts with hepatitis C virus/HCV core protein. The cofactor is Zn(2+).

It is found in the apical cell membrane. The protein localises to the cytoplasm. The catalysed reaction is an N-acyl-aromatic L-alpha-amino acid + H2O = an aromatic L-alpha-amino acid + a carboxylate. It carries out the reaction an N-acetyl-L-cysteine-S-conjugate + H2O = an S-substituted L-cysteine + acetate. Plays an important role in deacetylating mercapturic acids in kidney proximal tubules. Also acts on N-acetyl-aromatic amino acids. This chain is N-acyl-aromatic-L-amino acid amidohydrolase (carboxylate-forming) (ACY3), found in Homo sapiens (Human).